We begin with the raw amino-acid sequence, 358 residues long: Neutral protease 2 homolog PABG_02362 (358 aa).

Positions 1–19 (MRRVSGILAVAAFTISAFA) are cleaved as a signal peptide. The propeptide occupies 20-182 (GVIQPVAKDA…FAAMNQFVKI (163 aa)). 2 cysteine pairs are disulfide-bonded: Cys188-Cys259 and Cys266-Cys284. The N-linked (GlcNAc...) asparagine glycan is linked to Asn249. His309 is a binding site for Zn(2+). Residue Glu310 is part of the active site. Residues His313 and Asp324 each coordinate Zn(2+).

Belongs to the peptidase M35 family. It depends on Zn(2+) as a cofactor.

The protein resides in the secreted. It carries out the reaction Preferential cleavage of bonds with hydrophobic residues in P1'. Also 3-Asn-|-Gln-4 and 8-Gly-|-Ser-9 bonds in insulin B chain.. In terms of biological role, secreted metalloproteinase that allows assimilation of proteinaceous substrates. Shows high activities on basic nuclear substrates such as histone and protamine. This is Neutral protease 2 homolog PABG_02362 from Paracoccidioides brasiliensis (strain Pb03).